Here is a 364-residue protein sequence, read N- to C-terminus: MHPQVVILSLILHLADSVAGSVKVGGEAGPSVTLPCHYSGAVTSMCWNRGSCSLFTCQNGIVWTNGTHVTYRKDTRYKLLGDLSRRDVSLTIENTAVSDSGVYCCRVEHRGWFNDMKITVSLEIVPPKVTTTPIVTTVPTVTTVRTSTTVPTTTTVPMTTVPTTTVPTTMSIPTTTTVLTTMTVSTTTSVPTTTSIPTTTSVPVTTTVSTFVPPMPLPRQNHEPVATSPSSPQPAETHPTTLQGAIRREPTSSPLYSYTTDGNDTVTESSDGLWNNNQTQLFLEHSLLTANTTKGIYAGVCISVLVLLALLGVIIAKKYFFKKEVQQLSVSFSSLQIKALQNAVEKEVQAEDNIYIENSLYATD.

Positions 1-20 (MHPQVVILSLILHLADSVAG) are cleaved as a signal peptide. The region spanning 21–121 (SVKVGGEAGP…WFNDMKITVS (101 aa)) is the Ig-like V-type domain. The Extracellular portion of the chain corresponds to 21 to 295 (SVKVGGEAGP…SLLTANTTKG (275 aa)). 3 disulfides stabilise this stretch: Cys36–Cys105, Cys46–Cys57, and Cys52–Cys104. The N-linked (GlcNAc...) asparagine glycan is linked to Asn65. A run of 12 repeats spans residues 138-143 (VPTVTT), 144-149 (VRTSTT), 150-155 (VPTTTT), 156-160 (VPMTT), 161-165 (VPTTT), 166-171 (VPTTMS), 172-177 (IPTTTT), 178-183 (VLTTMT), 184-189 (VSTTTS), 190-195 (VPTTTS), 196-201 (IPTTTS), and 202-207 (VPVTTT). Residues 138 to 207 (VPTVTTVRTS…TTTSVPVTTT (70 aa)) form a 12 X 6 AA approximate tandem repeats of V-P-T-T-T-T] region. The segment at 216 to 257 (PLPRQNHEPVATSPSSPQPAETHPTTLQGAIRREPTSSPLYS) is disordered. Positions 227-243 (TSPSSPQPAETHPTTLQ) are enriched in polar residues. Asn263, Asn277, and Asn291 each carry an N-linked (GlcNAc...) asparagine glycan. A helical transmembrane segment spans residues 296-316 (IYAGVCISVLVLLALLGVIIA). Residues 317–364 (KKYFFKKEVQQLSVSFSSLQIKALQNAVEKEVQAEDNIYIENSLYATD) are Cytoplasmic-facing. Glycyl lysine isopeptide (Lys-Gly) (interchain with G-Cter in ubiquitin) cross-links involve residues Lys338 and Lys346.

This sequence belongs to the immunoglobulin superfamily. TIM family. In terms of assembly, interacts with STAM. Interacts with SELPLG. (Microbial infection) Interacts with hepatitis A virus capsid proteins. As to quaternary structure, (Microbial infection) Interacts with Ebolavirus envelope glycoprotein GP. In terms of assembly, (Microbial infection) Interacts with Zika virus envelope protein E. Post-translationally, ubiquitinated at two lysine residues Lys-338 and Lys-346 on its cytoplasmic domain. Ubiquitination promotes receptor endocytosis and target receptors for lysosomal degradation and termination of receptor signaling. (Microbial infection) Ubiquitination is required for Dengue virus endocytosis. As to expression, widely expressed, with highest levels in kidney and testis. Expressed by activated CD4+ T-cells during the development of helper T-cells responses.

The protein localises to the cell membrane. Functionally, phosphatidylserine receptor that plays an important functional role in regulatory B-cells homeostasis including generation, expansion and suppressor functions. As P-selectin/SELPLG ligand, plays a specialized role in activated but not naive T-cell trafficking during inflammatory responses. Controls thereby T-cell accumulation in the inflamed central nervous system (CNS) and the induction of autoimmune disease. Also regulates expression of various anti-inflammatory cytokines and co-inhibitory ligands including IL10. Acts as a regulator of T-cell proliferation. May play a role in kidney injury and repair. (Microbial infection) Acts as a receptor for Hepatitis A virus. Its function is as follows. (Microbial infection) Acts as a receptor for Ebolavirus and Marburg virus by binding exposed phosphatidyl-serine at the surface of virion membrane. Serves as a dual receptor for Ebolavirus by also interacting with envelope glycoprotein GP. In terms of biological role, (Microbial infection) Acts as a receptor for Dengue virus by binding exposed phosphatidyl-serine at the surface of virion membrane. TIM1 and Dengue virus are co-internalized during virus entry. Functionally, (Microbial infection) Acts as a receptor for Zika virus by binding to envelope protein E. (Microbial infection) Plays a positive role in Chikungunya virus cell entry. This chain is Hepatitis A virus cellular receptor 1 (HAVCR1), found in Homo sapiens (Human).